Consider the following 424-residue polypeptide: Ankyrin repeat domain-containing protein 61 (424 aa).

ANK repeat units follow at residues 80–109 (LSFL…DPEA), 113–169 (QGFT…ARVD), 172–201 (HRHC…QVNA), 205–234 (SSMT…SVNC), 239–278 (TGNT…QVNA), 282–311 (DGQA…NVNI), and 315–348 (NGES…PLRL).

The polypeptide is Ankyrin repeat domain-containing protein 61 (ANKRD61) (Bos taurus (Bovine)).